The chain runs to 290 residues: tRNA(Ile)-lysidine synthase, chloroplastic (290 aa).

33–38 (SGGQDS) contacts ATP.

It belongs to the tRNA(Ile)-lysidine synthase family.

It is found in the plastid. The protein resides in the chloroplast. It carries out the reaction cytidine(34) in tRNA(Ile2) + L-lysine + ATP = lysidine(34) in tRNA(Ile2) + AMP + diphosphate + H(+). Ligates lysine onto the cytidine present at position 34 of the AUA codon-specific tRNA(Ile) that contains the anticodon CAU, in an ATP-dependent manner. Cytidine is converted to lysidine, thus changing the amino acid specificity of the tRNA from methionine to isoleucine. In Cyanidioschyzon merolae (strain NIES-3377 / 10D) (Unicellular red alga), this protein is tRNA(Ile)-lysidine synthase, chloroplastic.